The following is a 405-amino-acid chain: uncharacterized protein (405 aa).

Helical transmembrane passes span 9-29 (VFAL…VTIV), 41-61 (VFLA…ASFC), 74-94 (VLAG…YSVT), 98-118 (QAFF…GAFF), 138-158 (ANGV…GLGG), 168-190 (LVVG…LHVN), 227-247 (ALAG…AVLH), 252-272 (WWGM…VIAI), 291-311 (LVMS…LCAL), and 373-393 (IAFI…LAQP).

The protein belongs to the major facilitator superfamily. Drug:H(+) antiporter-3 (DHA3) (TC 2.A.1.21) family.

Its subcellular location is the cell membrane. This is an uncharacterized protein from Bacillus subtilis (strain 168).